The primary structure comprises 178 residues: Protein 105R (178 aa).

Positions 1–18 are cleaved as a signal peptide; it reads MYFLFFFLLFLFPVGVKG.

This Pantherophis guttatus (Corn snake) protein is Protein 105R.